The primary structure comprises 749 residues: 1,4-alpha-glucan branching enzyme GlgB (749 aa).

Aspartate 427 (nucleophile) is an active-site residue. The active-site Proton donor is the glutamate 480.

This sequence belongs to the glycosyl hydrolase 13 family. GlgB subfamily. As to quaternary structure, monomer.

The enzyme catalyses Transfers a segment of a (1-&gt;4)-alpha-D-glucan chain to a primary hydroxy group in a similar glucan chain.. It functions in the pathway glycan biosynthesis; glycogen biosynthesis. Its function is as follows. Catalyzes the formation of the alpha-1,6-glucosidic linkages in glycogen by scission of a 1,4-alpha-linked oligosaccharide from growing alpha-1,4-glucan chains and the subsequent attachment of the oligosaccharide to the alpha-1,6 position. The chain is 1,4-alpha-glucan branching enzyme GlgB from Thermobifida fusca (strain YX).